The chain runs to 425 residues: Cyanogenic beta-glucosidase (425 aa).

A signal peptide spans 1–11; that stretch reads LLSITTTHIHA. A beta-D-glucoside-binding positions include Gln44, His148, and 193–194; that span reads NE. Residue Glu194 is the Proton donor of the active site. Cys213 and Cys221 are oxidised to a cystine. N-linked (GlcNAc...) asparagine glycosylation is present at Asn220. Residues Tyr337 and Glu408 each coordinate a beta-D-glucoside. Residue Glu408 is the Nucleophile of the active site. N-linked (GlcNAc...) asparagine glycosylation is present at Asn412.

The protein belongs to the glycosyl hydrolase 1 family. As to quaternary structure, homodimer. In terms of tissue distribution, leaves.

The enzyme catalyses Hydrolysis of terminal, non-reducing beta-D-glucosyl residues with release of beta-D-glucose.. In terms of biological role, hydrolyzes cyanoglucosides, contributing to the release of hydrocyanic acid, which functions as a defense mechanism against small predators, when the leaf tissue is damaged. This Trifolium repens (Creeping white clover) protein is Cyanogenic beta-glucosidase (LI).